Consider the following 402-residue polypeptide: MAT+ sexual cell fertilization-promoting factor (402 aa).

Positions 169–237 form a DNA-binding region, HMG box; sequence IPRPPNAYIL…KLMSAHPHYR (69 aa). A disordered region spans residues 246–272; sequence IRRRAPRRNRAQEVANASPIGENSGAP.

The protein resides in the nucleus. Functionally, controls fertilization, probably by determining the mating type. In Podospora anserina (Pleurage anserina), this protein is MAT+ sexual cell fertilization-promoting factor (FPR1).